Reading from the N-terminus, the 880-residue chain is Phosphoinositide 3-kinase regulatory subunit 5 (880 aa).

Met1 carries the N-acetylmethionine modification. The segment at 25-101 (SLSRRSTSWS…TPHFPPDSDL (77 aa)) is heterodimerization. Disordered regions lie at residues 315-339 (GILG…TDGH), 389-416 (SGYV…GHRR), 454-510 (RRAG…SGDE), and 565-601 (HGTS…TPWE). Acidic residues predominate over residues 318–335 (GDDEEEEEEEEEVEEDLE). A phosphoserine mark is found at Ser458 and Ser507. Pro residues predominate over residues 571–585 (ACPPPRSQTPSPPTD). The interval 653–753 (PILADMLLYY…WSNLEKVCTS (101 aa)) is interaction with beta-gamma G protein dimers.

Heterodimer of a catalytic subunit (PIK3CG/p120) and a regulatory (PIK3R5a/p101) subunit. Interacts with beta-gamma G protein dimers. As to expression, ubiquitously expressed with high expression in fetal brain compared to adult brain. Abundant expression is observed in cerebellum, cerebral cortex, cerebral meninges, and vermis cerebelli.

The protein localises to the nucleus. The protein resides in the cytoplasm. It is found in the cell membrane. Its activity is regulated as follows. Greatly activated by G gamma proteins. In terms of biological role, regulatory subunit of the PI3K gamma complex. Required for recruitment of the catalytic subunit to the plasma membrane via interaction with beta-gamma G protein dimers. Required for G protein-mediated activation of PIK3CG. In Homo sapiens (Human), this protein is Phosphoinositide 3-kinase regulatory subunit 5 (PIK3R5).